Reading from the N-terminus, the 663-residue chain is Methionine--tRNA ligase (663 aa).

The 'HIGH' region signature appears at 10-20 (AYTNGPLHLGH). Zn(2+) contacts are provided by C142, C145, C154, and C157. The 'KMSKS' region signature appears at 323-327 (KMSTS). T326 contributes to the ATP binding site. The tRNA-binding domain occupies 563 to 663 (YFTKVDLRVG…REISLGSKIH (101 aa)).

The protein belongs to the class-I aminoacyl-tRNA synthetase family. MetG type 1 subfamily. In terms of assembly, homodimer. The cofactor is Zn(2+).

It localises to the cytoplasm. It carries out the reaction tRNA(Met) + L-methionine + ATP = L-methionyl-tRNA(Met) + AMP + diphosphate. In terms of biological role, is required not only for elongation of protein synthesis but also for the initiation of all mRNA translation through initiator tRNA(fMet) aminoacylation. The polypeptide is Methionine--tRNA ligase (Methanococcus vannielii (strain ATCC 35089 / DSM 1224 / JCM 13029 / OCM 148 / SB)).